Here is a 99-residue protein sequence, read N- to C-terminus: NADH-quinone oxidoreductase subunit K (99 aa).

3 helical membrane-spanning segments follow: residues 3–23 (PINYLYLSALLFTIGAAGVLL), 28–48 (IVMFMCVELMLNAVNLAFVTF), and 59–79 (MIAFFTMVVAACEVVIGLAII).

It belongs to the complex I subunit 4L family. NDH-1 is composed of 14 different subunits. Subunits NuoA, H, J, K, L, M, N constitute the membrane sector of the complex.

The protein resides in the cell membrane. It carries out the reaction a quinone + NADH + 5 H(+)(in) = a quinol + NAD(+) + 4 H(+)(out). In terms of biological role, NDH-1 shuttles electrons from NADH, via FMN and iron-sulfur (Fe-S) centers, to quinones in the respiratory chain. The immediate electron acceptor for the enzyme in this species is believed to be a menaquinone. Couples the redox reaction to proton translocation (for every two electrons transferred, four hydrogen ions are translocated across the cytoplasmic membrane), and thus conserves the redox energy in a proton gradient. This chain is NADH-quinone oxidoreductase subunit K, found in Mycobacterium avium (strain 104).